A 472-amino-acid chain; its full sequence is Citrate synthase, mitochondrial (472 aa).

Catalysis depends on residues His308, His354, and Asp409.

It belongs to the citrate synthase family. As to quaternary structure, homodimer.

Its subcellular location is the mitochondrion matrix. It carries out the reaction oxaloacetate + acetyl-CoA + H2O = citrate + CoA + H(+). It functions in the pathway carbohydrate metabolism; tricarboxylic acid cycle; isocitrate from oxaloacetate: step 1/2. The chain is Citrate synthase, mitochondrial (CS) from Daucus carota (Wild carrot).